The chain runs to 602 residues: ATP-dependent DNA helicase II subunit 1 (602 aa).

The Ku domain occupies 268–483; that stretch reads FQCPLILDEK…YDNMKKVTQS (216 aa). S370, S371, and S372 each carry phosphoserine.

The protein belongs to the ku70 family. In terms of assembly, heterodimer of YKU70/HDF1 and YKU80/HDF2. In terms of processing, sumoylated by MMS21.

It is found in the nucleus. The protein resides in the chromosome. Its subcellular location is the telomere. It catalyses the reaction ATP + H2O = ADP + phosphate + H(+). Functionally, single-stranded DNA-dependent ATP-dependent helicase. Involved in non-homologous end joining (NHEJ) DNA double strand break repair. DNA-binding is sequence-independent but has a high affinity to nicks in double-stranded DNA and to the ends of duplex DNA. Binds to naturally occurring chromosomal ends, and therefore provides chromosomal end protection. Appears to have a role in recruitment of telomerase and CDC13 to the telomere and the subsequent telomere elongation. Required also for telomere recombination to repair telomeric ends in the absence of telomerase. KU70, of the KU70/KU80 heterodimer, binds to the stem loop of TLC1, the RNA component of telomerase. Involved in telomere maintenance. Interacts with telomeric repeats and subtelomeric sequences thereby controlling telomere length and protecting against subtelomeric rearrangement. Maintains telomeric chromatin, which is involved in silencing the expression of genes located at the telomere. Required for mating-type switching. In Saccharomyces cerevisiae (strain ATCC 204508 / S288c) (Baker's yeast), this protein is ATP-dependent DNA helicase II subunit 1 (YKU70).